A 427-amino-acid polypeptide reads, in one-letter code: Phosphatidylinositol 4-phosphate 5-kinase 10 (427 aa).

The PIPK domain maps to 1 to 419 (MFTREITAKD…RFQDFVSQIF (419 aa)). Disordered stretches follow at residues 247-287 (SRGS…DSEN) and 334-355 (MKIP…VGKQ). The interval 379–400 (YGVRKRLEHCYKSIQHSSKTIS) is activation loop.

The enzyme catalyses a 1,2-diacyl-sn-glycero-3-phospho-(1D-myo-inositol 4-phosphate) + ATP = a 1,2-diacyl-sn-glycero-3-phospho-(1D-myo-inositol-4,5-bisphosphate) + ADP + H(+). This is Phosphatidylinositol 4-phosphate 5-kinase 10 (PIP5K10) from Arabidopsis thaliana (Mouse-ear cress).